The primary structure comprises 460 residues: Argininosuccinate lyase (460 aa).

The protein belongs to the lyase 1 family. Argininosuccinate lyase subfamily.

It is found in the cytoplasm. The enzyme catalyses 2-(N(omega)-L-arginino)succinate = fumarate + L-arginine. Its pathway is amino-acid biosynthesis; L-arginine biosynthesis; L-arginine from L-ornithine and carbamoyl phosphate: step 3/3. The polypeptide is Argininosuccinate lyase (Limosilactobacillus fermentum (strain NBRC 3956 / LMG 18251) (Lactobacillus fermentum)).